Consider the following 595-residue polypeptide: Outer dynein arm-docking complex subunit 3 (595 aa).

A disordered region spans residues 1–69; that stretch reads MTSPLCRAAS…RGAGKPSVHS (69 aa). 2 coiled-coil regions span residues 94–327 and 385–473; these read WNIK…REHL and FAQL…ASKL.

As to quaternary structure, component of the outer dynein arm-docking complex along with ODAD1, ODAD2, ODAD4 and CLXN. Interacts with ODAD1. Interacts with PIERCE1 and PIERCE2; the interactions link the outer dynein arms docking complex (ODA-DC) to the internal microtubule inner proteins (MIP) in cilium axoneme.

It is found in the cytoplasm. The protein localises to the cytoskeleton. It localises to the cilium basal body. Its subcellular location is the microtubule organizing center. The protein resides in the centrosome. It is found in the centriole. The protein localises to the cilium axoneme. In terms of biological role, component of the outer dynein arm-docking complex (ODA-DC) that mediates outer dynein arms (ODA) binding onto the doublet microtubule. Involved in mediating assembly of both ODAs and their axonemal docking complex onto ciliary microtubules. The polypeptide is Outer dynein arm-docking complex subunit 3 (Homo sapiens (Human)).